The chain runs to 525 residues: Bifunctional enzyme NanE/NanK (525 aa).

Residues 1–241 form a manNAc-6-P epimerase region; the sequence is MRGSPRNLCR…DAVESAAKPS (241 aa). Positions 242-525 are manNAc kinase; sequence SPVLAFDIGG…VADLAATYFS (284 aa). Residues 246–253 and 372–379 each bind ATP; these read AFDIGGTK and GIGGGIVL.

The protein in the N-terminal section; belongs to the NanE family. This sequence in the C-terminal section; belongs to the ROK (NagC/XylR) family. NanK subfamily.

It carries out the reaction an N-acyl-D-glucosamine 6-phosphate = an N-acyl-D-mannosamine 6-phosphate. It catalyses the reaction an N-acyl-D-mannosamine + ATP = an N-acyl-D-mannosamine 6-phosphate + ADP + H(+). It functions in the pathway amino-sugar metabolism; N-acetylneuraminate degradation; D-fructose 6-phosphate from N-acetylneuraminate: step 2/5. It participates in amino-sugar metabolism; N-acetylneuraminate degradation; D-fructose 6-phosphate from N-acetylneuraminate: step 3/5. In terms of biological role, converts N-acetylmannosamine-6-phosphate (ManNAc-6-P) to N-acetylglucosamine-6-phosphate (GlcNAc-6-P). Catalyzes the phosphorylation of N-acetylmannosamine (ManNAc) to ManNAc-6-P. This chain is Bifunctional enzyme NanE/NanK (nanEK), found in Brucella suis biovar 1 (strain 1330).